The chain runs to 357 residues: Chaperone protein DnaJ (357 aa).

In terms of domain architecture, J spans 4–69 (DYYAILGVDR…QKRKQYDETG (66 aa)). The CR-type zinc finger occupies 132–213 (GASKNVKYRR…CHGTGTVSKN (82 aa)). Positions 145, 148, 161, 164, 187, 190, 201, and 204 each coordinate Zn(2+). CXXCXGXG motif repeat units lie at residues 145–152 (CEHCSGTG), 161–168 (CPTCHGSG), 187–194 (CRTCHGRG), and 201–208 (CTVCHGTG).

It belongs to the DnaJ family. Homodimer. It depends on Zn(2+) as a cofactor.

It localises to the cytoplasm. Participates actively in the response to hyperosmotic and heat shock by preventing the aggregation of stress-denatured proteins and by disaggregating proteins, also in an autonomous, DnaK-independent fashion. Unfolded proteins bind initially to DnaJ; upon interaction with the DnaJ-bound protein, DnaK hydrolyzes its bound ATP, resulting in the formation of a stable complex. GrpE releases ADP from DnaK; ATP binding to DnaK triggers the release of the substrate protein, thus completing the reaction cycle. Several rounds of ATP-dependent interactions between DnaJ, DnaK and GrpE are required for fully efficient folding. Also involved, together with DnaK and GrpE, in the DNA replication of plasmids through activation of initiation proteins. This Picrophilus torridus (strain ATCC 700027 / DSM 9790 / JCM 10055 / NBRC 100828 / KAW 2/3) protein is Chaperone protein DnaJ.